Consider the following 718-residue polypeptide: Cyclomaltodextrin glucanotransferase (718 aa).

A signal peptide spans 1–34 (MFQMAKRVLLSTTLTFSLLAGSALPFLPASAIYA). The A1 stretch occupies residues 35–172 (DADTAVTNKQ…GIKIIIDFAP (138 aa)). Aspartate 61, asparagine 63, asparagine 66, and asparagine 67 together coordinate Ca(2+). Cysteines 77 and 84 form a disulfide. Residues glycine 85 and aspartate 87 each contribute to the Ca(2+) site. Residue 134 to 135 (YW) participates in substrate binding. Asparagine 173 is a Ca(2+) binding site. A b region spans residues 173–236 (NHTSPAMETD…NLYDLADLNH (64 aa)). Histidine 174 lines the substrate pocket. A Ca(2+)-binding site is contributed by isoleucine 224. 227-230 (NLYD) contacts substrate. Aspartate 233 contributes to the Ca(2+) binding site. Residues 237 to 440 (NNSTIDTYFK…LRKSNPAIAY (204 aa)) form an A2 region. Arginine 261 is a binding site for substrate. The Nucleophile role is filled by aspartate 263. 266–267 (KH) is a substrate binding site. Histidine 267 contacts Ca(2+). Glutamate 291 serves as the catalytic Proton donor. Histidine 361, aspartate 405, and arginine 409 together coordinate substrate. The tract at residues 441–528 (GSTQQRWINN…ATAVWQYTAS (88 aa)) is c. The tract at residues 529 to 614 (ETTPTIGHVG…SNAYNDFTIL (86 aa)) is d. An IPT/TIG domain is found at 532–612 (PTIGHVGPVM…VNSNAYNDFT (81 aa)). Residues 613–718 (ILSGDQVSVR…GTATVTINWQ (106 aa)) form the CBM20 domain. Residues 615-718 (SGDQVSVRFV…GTATVTINWQ (104 aa)) are e.

The protein belongs to the glycosyl hydrolase 13 family. Monomer. Ca(2+) is required as a cofactor.

It localises to the secreted. The enzyme catalyses Cyclizes part of a (1-&gt;4)-alpha-D-glucan chain by formation of a (1-&gt;4)-alpha-D-glucosidic bond.. The chain is Cyclomaltodextrin glucanotransferase (cgtA) from Bacillus licheniformis.